A 66-amino-acid polypeptide reads, in one-letter code: Pteroicidin-alpha (66 aa).

The first 22 residues, 1-22 (MKCIALFLVLSMVVLMAEPGEA), serve as a signal peptide directing secretion. R43 carries the post-translational modification Arginine amide; partial. Residues 44-66 (GKNRDMAEQQELERAFDRERAFA) constitute a propeptide that is removed on maturation.

It belongs to the pleurocidin family. Post-translationally, this peptide exists in N-terminally amidated and non-amidated forms. The amidated form is more active and has a greater alpha-helix content than the non-amidated form. In terms of tissue distribution, expressed in gill, skin, intestine, spleen, anterior kidney, and blood cells.

The protein localises to the secreted. The amidated peptide is bactericidal on human pathogens like S.aureus or E.coli, as well as on the fish pathogen A.salmonicida. May also be active against a variety of fungi. It can kill bacteria in less than 30 minutes (S.aureus) and 120 minutes (V.vulnificus). It induces hemolysis of erythrocytes from human and fishes (sea bass and lesser-spotted dogfish). Its function is as follows. The non-amidated peptide only inhibits growth of human pathogens like S.aureus or E.coli, and the fish pathogen A.salmonicida. Induces hemolysis of erythrocytes from human and fishes (sea bass and lesser-spotted dogfish). This is Pteroicidin-alpha from Pterois volitans (Red lionfish).